Here is a 631-residue protein sequence, read N- to C-terminus: Myotonin-protein kinase (631 aa).

Residues 1–592 lie on the Cytoplasmic side of the membrane; that stretch reads MSAEVRLRQL…PRPGLSEARC (592 aa). The region spanning 71 to 339 is the Protein kinase domain; sequence FEILKVIGRG…AGDFQKHPFF (269 aa). ATP-binding positions include 77-85 and Lys-100; that span reads IGRGAFSEV. Asp-195 (proton acceptor) is an active-site residue. Phosphoserine; by autocatalysis is present on residues Ser-216 and Ser-228. Thr-234 carries the post-translational modification Phosphothreonine; by autocatalysis. The 76-residue stretch at 340 to 415 folds into the AGC-kinase C-terminal domain; the sequence is FGLDWEGLRD…CCMAFRDNQV (76 aa). Positions 464-532 form a coiled coil; that stretch reads AETTVTLQQL…QERMEMLQAP (69 aa). Residues 593-613 traverse the membrane as a helical; Anchor for type IV membrane protein segment; the sequence is LLLFAAALAAAATLGCTGLVA. The Lumenal segment spans residues 614 to 631; that stretch reads YTGGLTPVWCFPGATFAP.

The protein belongs to the protein kinase superfamily. AGC Ser/Thr protein kinase family. DMPK subfamily. As to quaternary structure, homodimer; homodimerization stimulates the kinase activity. Interacts with HSPB2; may enhance DMPK kinase activity. Interacts with PLN; phosphorylates PLN. May interact with RAC1; may regulate DMPK kinase activity. Interacts with LMNA; may regulate nuclear envelope stability. Mg(2+) is required as a cofactor. Post-translationally, phosphorylated. Autophosphorylates. Phosphorylation by RAF1 may result in activation of DMPK. In terms of processing, proteolytic processing of the C-terminus may remove the transmembrane domain and release the kinase from membranes stimulating its activity. Expressed in all tissues tested, with a predominance in brain, skeletal muscle, heart, and other tissues containing smooth muscle. In the heart, expression is restricted to the cardiomyocytes in the ventricle and atrium.

It is found in the sarcoplasmic reticulum membrane. The protein localises to the cell membrane. It localises to the endoplasmic reticulum membrane. The protein resides in the nucleus outer membrane. Its subcellular location is the mitochondrion outer membrane. It is found in the cytoplasm. The protein localises to the cytosol. It catalyses the reaction L-seryl-[protein] + ATP = O-phospho-L-seryl-[protein] + ADP + H(+). The catalysed reaction is L-threonyl-[protein] + ATP = O-phospho-L-threonyl-[protein] + ADP + H(+). Coiled-coil-mediated oligomerization enhances the catalytic activity. Proteolytic processing of the C-terminus may release the protein from membranes and constitute a mean to regulate the enzyme. May be regulated by HSPB2, RAC1, RAF1 and G-protein second messengers. Non-receptor serine/threonine protein kinase which is necessary for the maintenance of skeletal muscle structure and function. May play a role in myocyte differentiation and survival by regulating the integrity of the nuclear envelope and the expression of muscle-specific genes. May also phosphorylate PPP1R12A and inhibit the myosin phosphatase activity to regulate myosin phosphorylation. Also critical to the modulation of cardiac contractility and to the maintenance of proper cardiac conduction activity probably through the regulation of cellular calcium homeostasis. Phosphorylates PLN, a regulator of calcium pumps and may regulate sarcoplasmic reticulum calcium uptake in myocytes. May also phosphorylate FXYD1/PLM which is able to induce chloride currents. May also play a role in synaptic plasticity. The polypeptide is Myotonin-protein kinase (Dmpk) (Mus musculus (Mouse)).